The primary structure comprises 234 residues: Leucyl/phenylalanyl-tRNA--protein transferase (234 aa).

This sequence belongs to the L/F-transferase family.

The protein resides in the cytoplasm. It catalyses the reaction N-terminal L-lysyl-[protein] + L-leucyl-tRNA(Leu) = N-terminal L-leucyl-L-lysyl-[protein] + tRNA(Leu) + H(+). It carries out the reaction N-terminal L-arginyl-[protein] + L-leucyl-tRNA(Leu) = N-terminal L-leucyl-L-arginyl-[protein] + tRNA(Leu) + H(+). The enzyme catalyses L-phenylalanyl-tRNA(Phe) + an N-terminal L-alpha-aminoacyl-[protein] = an N-terminal L-phenylalanyl-L-alpha-aminoacyl-[protein] + tRNA(Phe). Functions in the N-end rule pathway of protein degradation where it conjugates Leu, Phe and, less efficiently, Met from aminoacyl-tRNAs to the N-termini of proteins containing an N-terminal arginine or lysine. This is Leucyl/phenylalanyl-tRNA--protein transferase from Pectobacterium carotovorum subsp. carotovorum (strain PC1).